The following is a 1392-amino-acid chain: DNA-directed RNA polymerase subunit beta (1392 aa).

The protein belongs to the RNA polymerase beta chain family. In terms of assembly, the RNAP catalytic core consists of 2 alpha, 1 beta, 1 beta' and 1 omega subunit. When a sigma factor is associated with the core the holoenzyme is formed, which can initiate transcription.

The enzyme catalyses RNA(n) + a ribonucleoside 5'-triphosphate = RNA(n+1) + diphosphate. DNA-dependent RNA polymerase catalyzes the transcription of DNA into RNA using the four ribonucleoside triphosphates as substrates. The protein is DNA-directed RNA polymerase subunit beta of Neisseria gonorrhoeae (strain ATCC 700825 / FA 1090).